The sequence spans 136 residues: Putative pre-16S rRNA nuclease (136 aa).

This sequence belongs to the YqgF nuclease family.

Its subcellular location is the cytoplasm. Functionally, could be a nuclease involved in processing of the 5'-end of pre-16S rRNA. In Francisella tularensis subsp. holarctica (strain FTNF002-00 / FTA), this protein is Putative pre-16S rRNA nuclease.